Consider the following 260-residue polypeptide: PHD finger protein ALFIN-LIKE 5 (260 aa).

M1 is modified (N-acetylmethionine). Positions 142–203 are disordered; the sequence is AEKQTKEMPS…EEDEDEDEHG (62 aa). The span at 148-165 shows a compositional bias: polar residues; that stretch reads EMPSSANQNGNRSKSNSK. The segment covering 167–181 has biased composition (basic and acidic residues); sequence RGLESKSSKTIHAKD. Residues 182–202 are compositionally biased toward acidic residues; sequence EEEGLELEEGEEEEDEDEDEH. A PHD-type zinc finger spans residues 204–256; that stretch reads ETLCGACGDNYASDEFWICCDMCEKWFHGECVKITPARAEHIKHYKCPTCSNK.

The protein belongs to the Alfin family. Interacts with H3K4me3 and to a lesser extent with H3K4me2. Ubiquitously expressed.

It localises to the nucleus. Its function is as follows. Histone-binding component that specifically recognizes H3 tails trimethylated on 'Lys-4' (H3K4me3), which mark transcription start sites of virtually all active genes. The sequence is that of PHD finger protein ALFIN-LIKE 5 (AL5) from Arabidopsis thaliana (Mouse-ear cress).